The following is an 84-amino-acid chain: Gomesin-like peptide (84 aa).

Residues 1–23 (MNRTRALVCLFLAVLILAHESEA) form the signal peptide. Gln24 carries the pyrrolidone carboxylic acid modification. Intrachain disulfides connect Cys25-Cys38 and Cys29-Cys34. Arg41 carries the arginine amide modification. The propeptide occupies 42–84 (GKRSVEEPSGGAQVVEKRAVDDADIPSAVEERELDEEESIEFR).

As to expression, expressed by the venom gland.

It is found in the secreted. Its function is as follows. Antibacterial peptide. This is Gomesin-like peptide from Hadronyche infensa (Fraser island funnel-web spider).